The primary structure comprises 501 residues: Glycerol kinase (501 aa).

Residue Thr17 coordinates ADP. The ATP site is built by Thr17, Thr18, and Ser19. Position 17 (Thr17) interacts with sn-glycerol 3-phosphate. Arg21 contributes to the ADP binding site. Sn-glycerol 3-phosphate is bound by residues Arg87, Glu88, Tyr139, and Asp243. Residues Arg87, Glu88, Tyr139, Asp243, and Gln244 each coordinate glycerol. Residues Thr265 and Gly308 each coordinate ADP. Residues Thr265, Gly308, Gln312, and Gly409 each coordinate ATP. ADP-binding residues include Gly409 and Asn413.

The protein belongs to the FGGY kinase family.

It carries out the reaction glycerol + ATP = sn-glycerol 3-phosphate + ADP + H(+). It participates in polyol metabolism; glycerol degradation via glycerol kinase pathway; sn-glycerol 3-phosphate from glycerol: step 1/1. Its activity is regulated as follows. Inhibited by fructose 1,6-bisphosphate (FBP). Key enzyme in the regulation of glycerol uptake and metabolism. Catalyzes the phosphorylation of glycerol to yield sn-glycerol 3-phosphate. This chain is Glycerol kinase, found in Pseudomonas fluorescens (strain ATCC BAA-477 / NRRL B-23932 / Pf-5).